Reading from the N-terminus, the 676-residue chain is E3 ubiquitin-protein ligase ICP0 (676 aa).

Residues 13–52 form an RING-type zinc finger; that stretch reads CCICLDAITGAARALPCLHAFCLACIRRWLEGRPTCPLCK. 3 disordered regions span residues 101-135, 266-486, and 555-676; these read DLTAADGEAPGAGGEAGAAGGSEAGGGAGGAEAAG, HLIP…PAPI, and AAIS…AWRQ. Gly residues predominate over residues 110 to 135; sequence PGAGGEAGAAGGSEAGGGAGGAEAAG. Over residues 286-303 the composition is skewed to acidic residues; the sequence is SDSDSEGSEDDSWSESEE. Over residues 304–314 the composition is skewed to low complexity; that stretch reads SSSGLSTSDLT. Residues 315-328 are compositionally biased toward acidic residues; it reads AIDDTETEPETDAE. The segment covering 351–361 has biased composition (polar residues); sequence YVSTRGRQTPA. Composition is skewed to low complexity over residues 375 to 388 and 397 to 411; these read GRAAAVSAPPSSRS and LPAAPRAAPAAQARA. Positions 422-439 are enriched in gly residues; sequence GAGLGVAAGETAGWGVGS. Over residues 440-450 the composition is skewed to basic and acidic residues; the sequence is EEGRGERRAKL. Residues 474 to 484 show a composition bias toward pro residues; that stretch reads TPAPAPAPAPA. Residues 555–597 show a composition bias toward low complexity; it reads AAISTRAPTPSPAGRAPAADPRRAGAPALAGAARAEAGRNGNP.

In terms of processing, auto-ubiquitinated. The strongly acidic region might serve as a transcriptional activation domain, possibly regulated through phosphorylation by casein kinase II.

It carries out the reaction S-ubiquitinyl-[E2 ubiquitin-conjugating enzyme]-L-cysteine + [acceptor protein]-L-lysine = [E2 ubiquitin-conjugating enzyme]-L-cysteine + N(6)-ubiquitinyl-[acceptor protein]-L-lysine.. Functionally, evades nuclear antiviral defenses triggered by dsDNA viruses. Acts during the initial stages of lytic infection and the reactivation of latent viral genome. Prevents the antiviral effect of nuclear bodies by degrading host PML and SP100. The sequence is that of E3 ubiquitin-protein ligase ICP0 (BICP0) from Bos taurus (Bovine).